We begin with the raw amino-acid sequence, 79 residues long: Sulfur carrier protein TusA (79 aa).

The active-site Cysteine persulfide intermediate is the C17.

This sequence belongs to the sulfur carrier protein TusA family.

The protein localises to the cytoplasm. Sulfur carrier protein which probably makes part of a sulfur-relay system. The polypeptide is Sulfur carrier protein TusA (Haemophilus influenzae (strain PittEE)).